A 188-amino-acid chain; its full sequence is uncharacterized protein (188 aa).

The residue at position 14 (Ser-14) is a Phosphoserine. Positions 165-188 are disordered; it reads RQAMAAKRNRFRKNVRKLPNKKKH. Over residues 171–188 the composition is skewed to basic residues; that stretch reads KRNRFRKNVRKLPNKKKH.

The protein resides in the nucleus. It localises to the nucleolus. This is an uncharacterized protein from Schizosaccharomyces pombe (strain 972 / ATCC 24843) (Fission yeast).